We begin with the raw amino-acid sequence, 196 residues long: Probable malonic semialdehyde reductase RutE (196 aa).

It belongs to the nitroreductase family. HadB/RutE subfamily. Requires FMN as cofactor.

The catalysed reaction is 3-hydroxypropanoate + NADP(+) = 3-oxopropanoate + NADPH + H(+). May reduce toxic product malonic semialdehyde to 3-hydroxypropionic acid, which is excreted. This Escherichia coli O81 (strain ED1a) protein is Probable malonic semialdehyde reductase RutE.